The primary structure comprises 172 residues: Transcriptional activator protein (172 aa).

The Nuclear localization signal motif lies at 56–71 (KAQHRIAKHKAIRRRR). A zinc finger lies at 76-93 (CGCSIFYHIKCADHGFTH). The interval 119–172 (DHAGGRSSIHTDKDIPHPSQVQSQPQESTGSPQSIPELPSLDDIDSSFWDDIFK) is disordered. Polar residues predominate over residues 137–152 (SQVQSQPQESTGSPQS). Positions 158–172 (SLDDIDSSFWDDIFK) are transactivation.

The protein belongs to the geminiviridae transcriptional activator protein family. As to quaternary structure, monomer. Homodimer. Homooligomer. Self-interaction correlates with nuclear localization and efficient activation of transcription. Monomers suppress local silencing by interacting with and inactivating host adenosine kinase 2 (ADK2) in the cytoplasm. Interacts with and inhibits host SNF1 kinase. Binds to ssDNA. Post-translationally, phosphorylated.

It localises to the host nucleus. Its subcellular location is the host cytoplasm. Functionally, strong activator of the late viral genes promoters. Enhances the expression of the capsid protein and nuclear shuttle protein. Acts as a suppressor of RNA-mediated gene silencing, also known as post-transcriptional gene silencing (PTGS), a mechanism of plant viral defense that limits the accumulation of viral RNAs. Suppresses the host RNA silencing by inhibiting adenosine kinase 2 (ADK2), a kinase involved in a general methylation pathway. Also suppresses the host basal defense by interacting with and inhibiting SNF1 kinase, a key regulator of cell metabolism implicated in innate antiviral defense. Determines pathogenicity. The chain is Transcriptional activator protein from Bean golden yellow mosaic virus (isolate Puerto Rico-Japan) (BGYMV).